The following is a 396-amino-acid chain: ATP-dependent RNA helicase eIF4A (396 aa).

The short motif at 22–50 is the Q motif element; the sequence is YSFDDLNLKPNIVRGIFGYGYESPSAIQQ. The region spanning 53 to 223 is the Helicase ATP-binding domain; it reads ILPITEGRDV…TKFMNNPVRI (171 aa). 66–73 serves as a coordination point for ATP; that stretch reads AQSGTGKT. The short motif at 171 to 174 is the DEAD box element; that stretch reads DEAD. Positions 234–395 constitute a Helicase C-terminal domain; it reads GIKQFYINVE…EMPANIGELF (162 aa).

The protein belongs to the DEAD box helicase family. eIF4A subfamily. In terms of assembly, component of the eIF4F complex, which composition varies with external and internal environmental conditions. It is composed of at least eIF4A, eIF4E and eIF4G.

It localises to the cytoplasm. It carries out the reaction ATP + H2O = ADP + phosphate + H(+). ATP-dependent RNA helicase which is a subunit of the eIF4F complex involved in cap recognition and is required for mRNA binding to ribosome. In the current model of translation initiation, eIF4A unwinds RNA secondary structures in the 5'-UTR of mRNAs which is necessary to allow efficient binding of the small ribosomal subunit, and subsequent scanning for the initiator codon. The polypeptide is ATP-dependent RNA helicase eIF4A (TIF1) (Meyerozyma guilliermondii (strain ATCC 6260 / CBS 566 / DSM 6381 / JCM 1539 / NBRC 10279 / NRRL Y-324) (Yeast)).